Reading from the N-terminus, the 56-residue chain is Large ribosomal subunit protein bL33 (56 aa).

The protein belongs to the bacterial ribosomal protein bL33 family.

The polypeptide is Large ribosomal subunit protein bL33 (Histophilus somni (strain 129Pt) (Haemophilus somnus)).